The primary structure comprises 152 residues: Aspartate 1-decarboxylase (152 aa).

Ser-24 serves as the catalytic Schiff-base intermediate with substrate; via pyruvic acid. Ser-24 is modified (pyruvic acid (Ser)). A substrate-binding site is contributed by Thr-56. The Proton donor role is filled by Tyr-57. 72-74 (GAA) is a substrate binding site.

This sequence belongs to the PanD family. Heterooctamer of four alpha and four beta subunits. Pyruvate is required as a cofactor. Post-translationally, is synthesized initially as an inactive proenzyme, which is activated by self-cleavage at a specific serine bond to produce a beta-subunit with a hydroxyl group at its C-terminus and an alpha-subunit with a pyruvoyl group at its N-terminus.

Its subcellular location is the cytoplasm. The enzyme catalyses L-aspartate + H(+) = beta-alanine + CO2. The protein operates within cofactor biosynthesis; (R)-pantothenate biosynthesis; beta-alanine from L-aspartate: step 1/1. Its function is as follows. Catalyzes the pyruvoyl-dependent decarboxylation of aspartate to produce beta-alanine. The sequence is that of Aspartate 1-decarboxylase from Rhodospirillum centenum (strain ATCC 51521 / SW).